Here is a 225-residue protein sequence, read N- to C-terminus: Enolase-phosphatase E1 (225 aa).

The protein belongs to the HAD-like hydrolase superfamily. MasA/MtnC family. As to quaternary structure, monomer. Mg(2+) is required as a cofactor.

It catalyses the reaction 5-methylsulfanyl-2,3-dioxopentyl phosphate + H2O = 1,2-dihydroxy-5-(methylsulfanyl)pent-1-en-3-one + phosphate. It participates in amino-acid biosynthesis; L-methionine biosynthesis via salvage pathway; L-methionine from S-methyl-5-thio-alpha-D-ribose 1-phosphate: step 3/6. The protein operates within amino-acid biosynthesis; L-methionine biosynthesis via salvage pathway; L-methionine from S-methyl-5-thio-alpha-D-ribose 1-phosphate: step 4/6. In terms of biological role, bifunctional enzyme that catalyzes the enolization of 2,3-diketo-5-methylthiopentyl-1-phosphate (DK-MTP-1-P) into the intermediate 2-hydroxy-3-keto-5-methylthiopentenyl-1-phosphate (HK-MTPenyl-1-P), which is then dephosphorylated to form the acireductone 1,2-dihydroxy-3-keto-5-methylthiopentene (DHK-MTPene). The chain is Enolase-phosphatase E1 from Pseudomonas aeruginosa (strain LESB58).